We begin with the raw amino-acid sequence, 756 residues long: Inhibitor of nuclear factor kappa-B kinase subunit beta (756 aa).

The Protein kinase domain occupies 15–300 (WEMKERLGTG…DPVYGPNGCF (286 aa)). ATP contacts are provided by residues 21-29 (LGTGGFGNV) and Lys-44. The active-site Proton acceptor is the Asp-145. Residue Lys-163 forms a Glycyl lysine isopeptide (Lys-Gly) (interchain with G-Cter in ubiquitin) linkage. Residue Ser-177 is modified to Phosphoserine; by TBK1 and PKC/PRKCZ. Cys-179 carries the S-nitrosocysteine modification. Ser-181 is subject to Phosphoserine; by TBK1, PKC/PRKCZ and PDPK1. Pro-191 carries the hydroxyproline modification. Residues 458 to 479 (LLRNNSCLSKMKNSMASMSQQL) form a leucine-zipper region. Ser-670, Ser-672, Ser-675, Ser-682, Ser-689, Ser-697, Ser-705, Ser-733, and Ser-740 each carry phosphoserine; by autocatalysis. Positions 737–742 (LDWSWL) are NEMO-binding.

It belongs to the protein kinase superfamily. Ser/Thr protein kinase family. I-kappa-B kinase subfamily. As to quaternary structure, component of the I-kappa-B-kinase (IKK) core complex consisting of CHUK, IKBKB and IKBKG; probably four alpha/CHUK-beta/IKBKB dimers are associated with four gamma/IKBKG subunits. The IKK core complex seems to associate with regulatory or adapter proteins to form a IKK-signalosome holo-complex. The IKK complex associates with TERF2IP/RAP1, leading to promote IKK-mediated phosphorylation of RELA/p65. Part of a complex composed of NCOA2, NCOA3, CHUK/IKKA, IKBKB, IKBKG and CREBBP. Part of a 70-90 kDa complex at least consisting of CHUK/IKKA, IKBKB, NFKBIA, RELA, ELP1 and MAP3K14. Found in a membrane raft complex, at least composed of BCL10, CARD11, DPP4 and IKBKB. Interacts with SQSTM1 through PRKCZ or PRKCI. Forms an NGF-induced complex with IKBKB, PRKCI and TRAF6. May interact with MAVS/IPS1. Interacts with NALP2. Interacts with TICAM1. Interacts with FAF1; the interaction disrupts the IKK complex formation. Interacts with ATM. Part of a ternary complex consisting of TANK, IKBKB and IKBKG. Interacts with NIBP; the interaction is direct. Interacts with ARRB1 and ARRB2. Interacts with TRIM21. Interacts with NLRC5; prevents IKBKB phosphorylation and kinase activity. Interacts with PDPK1. Interacts with EIF2AK2/PKR. The phosphorylated form interacts with PPM1A and PPM1B. Interacts with ZNF268; the interaction is further increased in a TNF-alpha-dependent manner. Interacts with IKBKE. Interacts with ZC3H12A. Interacts with AKAP13. Interacts with IFIT5; the interaction synergizes the recruitment of IKK to MAP3K7 and enhances IKK phosphorylation. Interacts with LRRC14; disrupts IKBKB-IKBKG interaction preventing I-kappa-B-kinase (IKK) core complex formation and leading to a decrease of IKBKB phosphorylation and NF-kappaB activation. Interacts with SASH1. Interacts with ARFIP2. Interacts with FKBP5. In terms of processing, upon cytokine stimulation, phosphorylated on Ser-177 and Ser-181 by MEKK1 and/or MAP3K14/NIK as well as TBK1 and PRKCZ; which enhances activity. Phosphorylated by MAP3K7/TAK1 in response to NOD1 and NOD2 signaling, promoting activation and phosphorylation of NF-kappa-B inhibitors, leading to NF-kappa-B activation. Once activated, autophosphorylates on the C-terminal serine cluster; which decreases activity and prevents prolonged activation of the inflammatory response. Phosphorylated by the IKK-related kinases TBK1 and IKBKE, which is associated with reduced CHUK/IKKA and IKBKB activity and NF-kappa-B-dependent gene transcription. Dephosphorylated at Ser-177 and Ser-181 by PPM1A and PPM1B. Post-translationally, ubiquitinated. Monoubiquitination involves TRIM21 that leads to inhibition of Tax-induced NF-kappa-B signaling. 'Ser-163' may not serve as a monoubiquitination site. Ubiquitination on 'Ser-163' may modulate phosphorylation on C-terminal serine residues. Hydroxylated by PHD1/EGLN2, loss of hydroxylation under hypoxic conditions results in activation of NF-kappa-B.

The protein resides in the cytoplasm. Its subcellular location is the nucleus. It localises to the membrane raft. The catalysed reaction is L-seryl-[I-kappa-B protein] + ATP = O-phospho-L-seryl-[I-kappa-B protein] + ADP + H(+). The enzyme catalyses L-seryl-[protein] + ATP = O-phospho-L-seryl-[protein] + ADP + H(+). It catalyses the reaction L-threonyl-[protein] + ATP = O-phospho-L-threonyl-[protein] + ADP + H(+). In terms of biological role, serine kinase that plays an essential role in the NF-kappa-B signaling pathway which is activated by multiple stimuli such as inflammatory cytokines, bacterial or viral products, DNA damages or other cellular stresses. Acts as a part of the canonical IKK complex in the conventional pathway of NF-kappa-B activation. Phosphorylates inhibitors of NF-kappa-B on 2 critical serine residues. These modifications allow polyubiquitination of the inhibitors and subsequent degradation by the proteasome. In turn, free NF-kappa-B is translocated into the nucleus and activates the transcription of hundreds of genes involved in immune response, growth control, or protection against apoptosis. In addition to the NF-kappa-B inhibitors, phosphorylates several other components of the signaling pathway including NEMO/IKBKG, NF-kappa-B subunits RELA and NFKB1, as well as IKK-related kinases TBK1 and IKBKE. IKK-related kinase phosphorylations may prevent the overproduction of inflammatory mediators since they exert a negative regulation on canonical IKKs. Phosphorylates FOXO3, mediating the TNF-dependent inactivation of this pro-apoptotic transcription factor. Also phosphorylates other substrates including NAA10, NCOA3, BCL10 and IRS1. Phosphorylates RIPK1 at 'Ser-25' which represses its kinase activity and consequently prevents TNF-mediated RIPK1-dependent cell death. Phosphorylates the C-terminus of IRF5, stimulating IRF5 homodimerization and translocation into the nucleus. This is Inhibitor of nuclear factor kappa-B kinase subunit beta (IKBKB) from Bos taurus (Bovine).